A 612-amino-acid chain; its full sequence is Peroxisomal carnitine O-octanoyltransferase (612 aa).

Met-1 is modified (N-acetylmethionine). N6-succinyllysine occurs at positions 40 and 57. His-327 functions as the Proton acceptor in the catalytic mechanism. CoA contacts are provided by residues Lys-406 and 410–417 (KEEALHPD). At Lys-406 the chain carries N6-acetyllysine; alternate. Lys-406 bears the N6-succinyllysine; alternate mark. Positions 439, 441, and 452 each coordinate (R)-carnitine. The short motif at 610-612 (AHL) is the Microbody targeting signal element.

It belongs to the carnitine/choline acetyltransferase family.

The protein localises to the peroxisome. It catalyses the reaction octanoyl-CoA + (R)-carnitine = O-octanoyl-(R)-carnitine + CoA. The catalysed reaction is 4,8-dimethylnonanoyl-CoA + (R)-carnitine = O-4,8-dimethylnonanoyl-(R)-carnitine + CoA. The protein operates within lipid metabolism; fatty acid beta-oxidation. In terms of biological role, beta-oxidation of fatty acids. The highest activity concerns the C6 to C10 chain length substrate. The chain is Peroxisomal carnitine O-octanoyltransferase (Crot) from Mus musculus (Mouse).